A 2371-amino-acid polypeptide reads, in one-letter code: Highly reducing polyketide synthase ntnH (2371 aa).

The Ketosynthase family 3 (KS3) domain maps to 10 to 429 (PSPIAIVGIG…GANAHVILEG (420 aa)). Residues Cys180, His316, and His352 each act as for beta-ketoacyl synthase activity in the active site. The interval 528–796 (FIFTGQGAQW…NSCLSRGADA (269 aa)) is malonyl-CoA:ACP transacylase (MAT) domain. Positions 858–986 (HELLGARVIG…GKVHPGNAST (129 aa)) are N-terminal hotdog fold. Positions 858-1142 (HELLGARVIG…GIRFRILENN (285 aa)) are dehydratase (DH) domain. Residues 858–1145 (HELLGARVIG…FRILENNRSK (288 aa)) enclose the PKS/mFAS DH domain. The Proton acceptor; for dehydratase activity role is filled by His890. The C-terminal hotdog fold stretch occupies residues 1001 to 1145 (VRGVISAKWY…FRILENNRSK (145 aa)). The active-site Proton donor; for dehydratase activity is the Asp1059. Residues 1309-1456 (FFQLLGHNKK…FENVTAIMDQ (148 aa)) form a methyltransferase (CMet) domain region. An enoyl reductase (ER) (ER) domain region spans residues 1669 to 1968 (GLLSSLQWQG…GHRPIGAICI (300 aa)). The interval 1993–2167 (SYVLIGGLGG…ASVIDLGVME (175 aa)) is ketoreductase (KR) domain. A Carrier domain is found at 2280–2362 (EDETAVAEFL…DLGKLARSRI (83 aa)). Ser2322 carries the O-(pantetheine 4'-phosphoryl)serine modification.

It functions in the pathway secondary metabolite biosynthesis; terpenoid biosynthesis. Its function is as follows. Highly reducing polyketide synthase; part of the gene cluster that mediates the biosynthesis of the meroterpenoids nectripenoids A and B, as well as cochliquninone D and isocochliquninone E. The pathway probably begins with the HR-PKS ntnH that catalyzes two chain-extension steps to form a reduced triketide, which then primes the SAT domain in the NR-PKS ntnG to initiate three more cycles of extension to give a linear hexaketide corresponding to the polyketide part of nectripenoids. The FAD-dependent monooxygenase ntnJ then performs an oxidative decarboxylation at C11 of the ntnH/ntnG product, via an electrophilic aromatic hydroxylation with concomitant ipso-decarboxylation. The membrane-bound polyprenyl transferase ntnF then introduces a farnesyl group before the FAD-dependent monooxygenase ntnK functions as the first epoxidase on terminal C12'-C13' olefin, followed by a second epoxidation on C7'-C8' catalyzed by ntnA. The terpene cyclase/mutase ntnI then initiates the sequential tricyclic ring formation through protonation of the terminal epoxide and catalyzes the regioselective and stereoselective 6/6/6-tricyclic ring formation. The cytochrome P450 monooxygenase ntnM may then hydroxylate C1'. The protein is Highly reducing polyketide synthase ntnH of Nectria sp.